The primary structure comprises 259 residues: Small ribosomal subunit protein uS2 (259 aa).

The segment at 228 to 259 (VSFGSEEAEENNQKEDNEEIFEIEDVDESEEM) is disordered. The span at 233–259 (EEAEENNQKEDNEEIFEIEDVDESEEM) shows a compositional bias: acidic residues.

This sequence belongs to the universal ribosomal protein uS2 family.

In Thermosipho africanus (strain TCF52B), this protein is Small ribosomal subunit protein uS2.